A 269-amino-acid polypeptide reads, in one-letter code: Phosphate import ATP-binding protein PstB (269 aa).

The region spanning 22-264 is the ABC transporter domain; sequence IKVKNVDFFY…PANKKTEDYI (243 aa). 55–62 lines the ATP pocket; that stretch reads GSSGSGKS.

Belongs to the ABC transporter superfamily. Phosphate importer (TC 3.A.1.7) family. The complex is composed of two ATP-binding proteins (PstB), two transmembrane proteins (PstC and PstA) and a solute-binding protein (PstS).

The protein resides in the cell membrane. It catalyses the reaction phosphate(out) + ATP + H2O = ADP + 2 phosphate(in) + H(+). Functionally, part of the ABC transporter complex PstSACB involved in phosphate import. Responsible for energy coupling to the transport system. The sequence is that of Phosphate import ATP-binding protein PstB from Spiroplasma kunkelii.